Here is a 243-residue protein sequence, read N- to C-terminus: 3-deoxy-manno-octulosonate cytidylyltransferase (243 aa).

Belongs to the KdsB family.

The protein resides in the cytoplasm. The enzyme catalyses 3-deoxy-alpha-D-manno-oct-2-ulosonate + CTP = CMP-3-deoxy-beta-D-manno-octulosonate + diphosphate. Its pathway is nucleotide-sugar biosynthesis; CMP-3-deoxy-D-manno-octulosonate biosynthesis; CMP-3-deoxy-D-manno-octulosonate from 3-deoxy-D-manno-octulosonate and CTP: step 1/1. It functions in the pathway bacterial outer membrane biogenesis; lipopolysaccharide biosynthesis. Activates KDO (a required 8-carbon sugar) for incorporation into bacterial lipopolysaccharide in Gram-negative bacteria. The protein is 3-deoxy-manno-octulosonate cytidylyltransferase of Bartonella bacilliformis (strain ATCC 35685 / KC583 / Herrer 020/F12,63).